Here is a 652-residue protein sequence, read N- to C-terminus: Threonine--tRNA ligase (652 aa).

Residues 1 to 61 (MIKLKLPDGS…DRDAEVEIVT (61 aa)) form the TGS domain. The interval 243 to 548 (DHRKIGREMD…LIENYEGRFP (306 aa)) is catalytic. Residues C348, H399, and H525 each coordinate Zn(2+).

The protein belongs to the class-II aminoacyl-tRNA synthetase family. As to quaternary structure, homodimer. Zn(2+) serves as cofactor.

The protein localises to the cytoplasm. It carries out the reaction tRNA(Thr) + L-threonine + ATP = L-threonyl-tRNA(Thr) + AMP + diphosphate + H(+). In terms of biological role, catalyzes the attachment of threonine to tRNA(Thr) in a two-step reaction: L-threonine is first activated by ATP to form Thr-AMP and then transferred to the acceptor end of tRNA(Thr). Also edits incorrectly charged L-seryl-tRNA(Thr). The polypeptide is Threonine--tRNA ligase (Parvibaculum lavamentivorans (strain DS-1 / DSM 13023 / NCIMB 13966)).